A 659-amino-acid chain; its full sequence is Exoribonuclease 2 (659 aa).

Residues 189 to 532 form the RNB domain; it reads REDLTHLYFT…HRLIKQVLSN (344 aa). In terms of domain architecture, S1 motif spans 576–658; it reads NVEFDGEIQD…ETRSVVGDVL (83 aa).

It belongs to the RNR ribonuclease family. RNase II subfamily.

The protein resides in the cytoplasm. It carries out the reaction Exonucleolytic cleavage in the 3'- to 5'-direction to yield nucleoside 5'-phosphates.. Its function is as follows. Involved in mRNA degradation. Hydrolyzes single-stranded polyribonucleotides processively in the 3' to 5' direction. This is Exoribonuclease 2 from Glaesserella parasuis serovar 5 (strain SH0165) (Haemophilus parasuis).